Reading from the N-terminus, the 572-residue chain is Sulfite reductase [NADPH] hemoprotein beta-component (572 aa).

Positions 437, 443, 482, and 486 each coordinate [4Fe-4S] cluster. Cysteine 486 provides a ligand contact to siroheme.

This sequence belongs to the nitrite and sulfite reductase 4Fe-4S domain family. As to quaternary structure, alpha(8)-beta(8). The alpha component is a flavoprotein, the beta component is a hemoprotein. Requires siroheme as cofactor. [4Fe-4S] cluster is required as a cofactor.

It catalyses the reaction hydrogen sulfide + 3 NADP(+) + 3 H2O = sulfite + 3 NADPH + 4 H(+). It participates in sulfur metabolism; hydrogen sulfide biosynthesis; hydrogen sulfide from sulfite (NADPH route): step 1/1. Functionally, component of the sulfite reductase complex that catalyzes the 6-electron reduction of sulfite to sulfide. This is one of several activities required for the biosynthesis of L-cysteine from sulfate. In Staphylococcus epidermidis (strain ATCC 35984 / DSM 28319 / BCRC 17069 / CCUG 31568 / BM 3577 / RP62A), this protein is Sulfite reductase [NADPH] hemoprotein beta-component.